The following is a 218-amino-acid chain: Cytochrome b6 (218 aa).

A helical transmembrane segment spans residues 35–55 (IFYCLGGITLVCFLIQFATGF). Cysteine 38 is a binding site for heme c. 2 residues coordinate heme b: histidine 89 and histidine 103. A run of 3 helical transmembrane segments spans residues 93–113 (ASMM…TGGF), 119–139 (LTWV…VTGY), and 189–209 (LHTF…FLMI). Residues histidine 190 and histidine 205 each contribute to the heme b site.

This sequence belongs to the cytochrome b family. PetB subfamily. The 4 large subunits of the cytochrome b6-f complex are cytochrome b6, subunit IV (17 kDa polypeptide, PetD), cytochrome f and the Rieske protein, while the 4 small subunits are PetG, PetL, PetM and PetN. The complex functions as a dimer. Heme b is required as a cofactor. The cofactor is heme c.

It localises to the cellular thylakoid membrane. Component of the cytochrome b6-f complex, which mediates electron transfer between photosystem II (PSII) and photosystem I (PSI), cyclic electron flow around PSI, and state transitions. The polypeptide is Cytochrome b6 (Parasynechococcus marenigrum (strain WH8102)).